A 231-amino-acid chain; its full sequence is Large ribosomal subunit protein uL1 (231 aa).

The protein belongs to the universal ribosomal protein uL1 family. In terms of assembly, part of the 50S ribosomal subunit.

Binds directly to 23S rRNA. The L1 stalk is quite mobile in the ribosome, and is involved in E site tRNA release. Its function is as follows. Protein L1 is also a translational repressor protein, it controls the translation of the L11 operon by binding to its mRNA. This is Large ribosomal subunit protein uL1 from Pseudomonas putida (strain ATCC 700007 / DSM 6899 / JCM 31910 / BCRC 17059 / LMG 24140 / F1).